The sequence spans 394 residues: Acetate kinase (394 aa).

Residue asparagine 8 coordinates Mg(2+). Residue lysine 15 coordinates ATP. Arginine 86 serves as a coordination point for substrate. Aspartate 143 serves as the catalytic Proton donor/acceptor. ATP contacts are provided by residues 201-205 (HLGNG), 276-278 (DCR), and 324-328 (GIGEN). Residue glutamate 378 participates in Mg(2+) binding.

This sequence belongs to the acetokinase family. Homodimer. It depends on Mg(2+) as a cofactor. The cofactor is Mn(2+).

It localises to the cytoplasm. The enzyme catalyses acetate + ATP = acetyl phosphate + ADP. It functions in the pathway metabolic intermediate biosynthesis; acetyl-CoA biosynthesis; acetyl-CoA from acetate: step 1/2. Catalyzes the formation of acetyl phosphate from acetate and ATP. Can also catalyze the reverse reaction. This Dichelobacter nodosus (strain VCS1703A) protein is Acetate kinase.